The following is a 122-amino-acid chain: Biogenesis of lysosome-related organelles complex 1 subunit CNL1 (122 aa).

Basic and acidic residues predominate over residues 1–10 (MQDNSSHSRE). The tract at residues 1 to 21 (MQDNSSHSRESASAGDDPLGI) is disordered. The stretch at 63–95 (ENTIDKNIAKFKELLEKCDTLENHYEMLNQLAI) forms a coiled coil.

It belongs to the BLOC1S4 family. Component of the biogenesis of lysosome-related organelles complex-1 (BLOC-1) composed of at least BLI1, BLS1, CNL1, KXD1, SNN1 and VAB2.

Its subcellular location is the cytoplasm. In terms of biological role, component of the biogenesis of lysosome-related organelles complex-1 (BLOC-1), a complex that is involved in endosomal cargo sorting. The protein is Biogenesis of lysosome-related organelles complex 1 subunit CNL1 (CNL1) of Saccharomyces cerevisiae (strain ATCC 204508 / S288c) (Baker's yeast).